Reading from the N-terminus, the 391-residue chain is Thioredoxin-interacting protein (391 aa).

K212 participates in a covalent cross-link: Glycyl lysine isopeptide (Lys-Gly) (interchain with G-Cter in ubiquitin). S361 is modified (phosphoserine).

The protein belongs to the arrestin family. As to quaternary structure, homodimer; disulfide-linked. Interacts with TXN/thioredoxin through its redox-active site. Interacts with transcriptional repressors ZBTB16, ZBTB32 and HDAC1. Interacts with DDIT4. Post-translationally, ubiquitinated; undergoes heterotypic 'Lys-48'-/'Lys-63'-branched polyubiquitination catalyzed by ITCH and UBR5 resulting in proteasomal degradation. Deubiquitinated by USP5, leading to TXNIP stabilization.

It is found in the cytoplasm. May act as an oxidative stress mediator by inhibiting thioredoxin activity or by limiting its bioavailability. Interacts with COPS5 and restores COPS5-induced suppression of CDKN1B stability, blocking the COPS5-mediated translocation of CDKN1B from the nucleus to the cytoplasm. Functions as a transcriptional repressor, possibly by acting as a bridge molecule between transcription factors and corepressor complexes, and over-expression will induce G0/G1 cell cycle arrest. Required for the maturation of natural killer cells. Acts as a suppressor of tumor cell growth. Inhibits the proteasomal degradation of DDIT4, and thereby contributes to the inhibition of the mammalian target of rapamycin complex 1 (mTORC1). The sequence is that of Thioredoxin-interacting protein (TXNIP) from Pongo abelii (Sumatran orangutan).